We begin with the raw amino-acid sequence, 500 residues long: Cytochrome P450 2D16 (500 aa).

Ser-249 is modified (phosphoserine). Residue Cys-446 participates in heme binding.

Belongs to the cytochrome P450 family. Heme is required as a cofactor. Expressed at high levels in the inner zone of the adrenal cortex.

Its subcellular location is the endoplasmic reticulum membrane. It localises to the microsome membrane. The enzyme catalyses an organic molecule + reduced [NADPH--hemoprotein reductase] + O2 = an alcohol + oxidized [NADPH--hemoprotein reductase] + H2O + H(+). Cytochromes P450 are a group of heme-thiolate monooxygenases. In liver microsomes, this enzyme is involved in an NADPH-dependent electron transport pathway. It oxidizes a variety of structurally unrelated compounds, including steroids, fatty acids, and xenobiotics. This Cavia porcellus (Guinea pig) protein is Cytochrome P450 2D16 (CYP2D16).